Reading from the N-terminus, the 457-residue chain is Phosphoglucosamine mutase (457 aa).

Residue serine 103 is the Phosphoserine intermediate of the active site. Residues serine 103, aspartate 245, aspartate 247, and aspartate 249 each contribute to the Mg(2+) site. Serine 103 is subject to Phosphoserine.

Belongs to the phosphohexose mutase family. It depends on Mg(2+) as a cofactor. Post-translationally, activated by phosphorylation.

The enzyme catalyses alpha-D-glucosamine 1-phosphate = D-glucosamine 6-phosphate. In terms of biological role, catalyzes the conversion of glucosamine-6-phosphate to glucosamine-1-phosphate. The protein is Phosphoglucosamine mutase of Syntrophotalea carbinolica (strain DSM 2380 / NBRC 103641 / GraBd1) (Pelobacter carbinolicus).